A 533-amino-acid chain; its full sequence is Phospho-2-dehydro-3-deoxyheptonate aldolase 1, chloroplastic (533 aa).

Residues 1 to 57 (MALSTNSTTSSLLPKTPLVQQPLLKNASLPTTTKAIRFIQPISAIHSSDSSKNTPIV) constitute a chloroplast transit peptide. The segment covering 47 to 56 (SSDSSKNTPI) has biased composition (polar residues). Positions 47-70 (SSDSSKNTPIVSAKPSSPPAATST) are disordered. A compositionally biased stretch (low complexity) spans 57-70 (VSAKPSSPPAATST). Cys145 is a binding site for Mn(2+). Residues Arg184, 343–344 (ER), Lys366, and Arg397 contribute to the substrate site. His429, Glu471, and Asp501 together coordinate Mn(2+).

This sequence belongs to the class-II DAHP synthase family. As to quaternary structure, homodimer. It depends on Mn(2+) as a cofactor. In terms of tissue distribution, mostly expressed in flowers, especially in petal limbs and tubes, and, to a lower extent, in roots, stems, stigmas, anthers, leaves and sepals.

The protein localises to the plastid. It localises to the chloroplast. It catalyses the reaction D-erythrose 4-phosphate + phosphoenolpyruvate + H2O = 7-phospho-2-dehydro-3-deoxy-D-arabino-heptonate + phosphate. Its pathway is metabolic intermediate biosynthesis; chorismate biosynthesis; chorismate from D-erythrose 4-phosphate and phosphoenolpyruvate: step 1/7. Involved in the production of volatile organic compounds (VOCs), including floral volatile benzenoids and phenylpropanoids (FVBP), in flowers of fragrant cultivars (e.g. cv. Mitchell and cv. V26), scent attracting pollinators (e.g. the night-active hawkmoth pollinator Manduca sexta). Catalyzes an aldol-like condensation reaction between phosphoenolpyruvate (PEP) and D-erythrose 4-phosphate (E4P) to generate 3-deoxy-D-arabino-heptulosonate 7-phosphate (DAH7P) and inorganic phosphate. The sequence is that of Phospho-2-dehydro-3-deoxyheptonate aldolase 1, chloroplastic from Petunia hybrida (Petunia).